The following is a 622-amino-acid chain: Palmitoyl-protein thioesterase-dolichyl pyrophosphate phosphatase fusion 1 (622 aa).

Positions 1–24 (MLSCSSFLIFFLFSWVLLPMKSFA) are cleaved as a signal peptide. Residues 25-405 (IPIISLDKVR…NVSEEKGPKS (381 aa)) are Lumenal-facing. Cys106 and Cys138 are joined by a disulfide. Ser125 is an active-site residue. N-linked (GlcNAc...) asparagine glycosylation occurs at Asn223. Residue Asp245 is part of the active site. Asn260 is a glycosylation site (N-linked (GlcNAc...) asparagine). His298 is a catalytic residue. Asn396 carries an N-linked (GlcNAc...) asparagine glycan. Residues 406-426 (FANLAFITIFSHFFYHIDDMW) traverse the membrane as a helical segment. Topologically, residues 427-428 (RS) are cytoplasmic. The helical transmembrane segment at 429–449 (TLGLFSLIPQIIGIIYLTVMF) threads the bilayer. Over 450–488 (TGRELDTFMQFGGQVVNEFINYVVKVSLKYPRPADIEYG) the chain is Lumenal. Residues 489 to 511 (VGYGMPSSHSQFMGFFSAYMIAW) traverse the membrane as a helical segment. At 512–519 (DYKYRRSQ) the chain is on the cytoplasmic side. The chain crosses the membrane as a helical span at residues 520-540 (CFSMLSFAKYAIYLTLSTFVC). Over 541–552 (SSRYLLDFHYLT) the chain is Lumenal. A helical membrane pass occupies residues 553-573 (QVVYGYMIGFGVGLFWVYLVG). At 574–622 (KLRSLGVTKWLLSLPPLQFFYIKDTIPHSKDNHKRQWLESKQFKNQKSN) the chain is on the cytoplasmic side.

This sequence in the N-terminal section; belongs to the palmitoyl-protein thioesterase family. The protein in the C-terminal section; belongs to the dolichyldiphosphatase family. Post-translationally, proteolytically cleaved, possibly by krp1.

It localises to the vacuole. The protein resides in the endoplasmic reticulum membrane. The enzyme catalyses S-hexadecanoyl-L-cysteinyl-[protein] + H2O = L-cysteinyl-[protein] + hexadecanoate + H(+). It carries out the reaction a di-trans,poly-cis-dolichyl diphosphate + H2O = a di-trans,poly-cis-dolichyl phosphate + phosphate + H(+). Its function is as follows. Essential protein. Removes thioester-linked fatty acyl groups such as palmitate from modified cysteine residues in proteins or peptides during vacuolar degradation. Required for efficient N-glycosylation. Necessary for maintaining optimal levels of dolichol-linked oligosaccharides. The polypeptide is Palmitoyl-protein thioesterase-dolichyl pyrophosphate phosphatase fusion 1 (pdf1) (Schizosaccharomyces pombe (strain 972 / ATCC 24843) (Fission yeast)).